Reading from the N-terminus, the 471-residue chain is Ribulose bisphosphate carboxylase large chain 2 (471 aa).

Residues Asn116 and Thr166 each contribute to the substrate site. The active-site Proton acceptor is the Lys168. Lys170 contacts substrate. 3 residues coordinate Mg(2+): Lys194, Asp196, and Glu197. N6-carboxylysine is present on Lys194. Catalysis depends on His287, which acts as the Proton acceptor. 3 residues coordinate substrate: Arg288, His320, and Ser372.

It belongs to the RuBisCO large chain family. Type I subfamily. As to quaternary structure, heterohexadecamer of 8 large chains and 8 small chains. Forms a CsoS2-CsoS1-RuBisCO complex. Mg(2+) serves as cofactor.

The protein localises to the carboxysome. The enzyme catalyses 2 (2R)-3-phosphoglycerate + 2 H(+) = D-ribulose 1,5-bisphosphate + CO2 + H2O. It carries out the reaction D-ribulose 1,5-bisphosphate + O2 = 2-phosphoglycolate + (2R)-3-phosphoglycerate + 2 H(+). RuBisCO catalyzes two reactions: the carboxylation of D-ribulose 1,5-bisphosphate, the primary event in carbon dioxide fixation, as well as the oxidative fragmentation of the pentose substrate. Both reactions occur simultaneously and in competition at the same active site. Replacing the endogenous type I ccbLS genes in H.neapolitanus with this carboxysomally targeted enzyme reconstitutes RuBisCO with about 25% of normal activity; the active enzyme is targeted to carboxysomes. The protein is Ribulose bisphosphate carboxylase large chain 2 of Hydrogenovibrio crunogenus (strain DSM 25203 / XCL-2) (Thiomicrospira crunogena).